The chain runs to 512 residues: Cytochrome P450 monooxygenase paxQ (512 aa).

A run of 2 helical transmembrane segments spans residues 3–23 (FVLS…LVSI) and 35–55 (LQIP…ISAL). Position 453 (Cys-453) interacts with heme.

Belongs to the cytochrome P450 family. It depends on heme as a cofactor.

It localises to the membrane. The protein operates within secondary metabolite biosynthesis. Functionally, cytochrome P450 monooxygenase; part of the gene cluster that mediates the biosynthesis of paxilline, a mycotoxin that acts as an inhibitor of mammalian maxi-K channels. PaxG, the geranylgeranyl diphosphate (GGPP) synthase is proposed to catalyze the first step in paxilline biosynthesis. Condensation of indole-3-glycerol phosphate with GGPP by paxC then forms 3-geranylgeranylindole (3-GGI), followed by epoxidation and cyclization of this intermediate (by paxM and paxB) to form paspaline. Paspaline is subsequently converted to 13-desoxypaxilline by paxP, the latter being then converted to paxilline by paxQ. Finally paxilline can be mono- and di-prenylated by paxD. PaxQ can also utilized beta-paxitriol and alpha-PC-M6 as substrates converting them to alpha-paxitriol. This chain is Cytochrome P450 monooxygenase paxQ, found in Penicillium paxilli.